Here is a 555-residue protein sequence, read N- to C-terminus: Methionine--tRNA ligase (555 aa).

The 'HIGH' region signature appears at 13–23 (PYANGSLHIGH). Zn(2+) is bound by residues C144, C147, C157, and C160. A 'KMSKS' region motif is present at residues 330-334 (KISKS). K333 provides a ligand contact to ATP.

The protein belongs to the class-I aminoacyl-tRNA synthetase family. MetG type 1 subfamily. Monomer. It depends on Zn(2+) as a cofactor.

The protein resides in the cytoplasm. The catalysed reaction is tRNA(Met) + L-methionine + ATP = L-methionyl-tRNA(Met) + AMP + diphosphate. Functionally, is required not only for elongation of protein synthesis but also for the initiation of all mRNA translation through initiator tRNA(fMet) aminoacylation. In Blochmanniella pennsylvanica (strain BPEN), this protein is Methionine--tRNA ligase.